We begin with the raw amino-acid sequence, 545 residues long: CTP synthase (545 aa).

Positions 1-266 (MITNYIFVTG…DQYICDKFNL (266 aa)) are amidoligase domain. Ser-14 provides a ligand contact to CTP. Ser-14 is a UTP binding site. Residues 15–20 (SLGKGI) and Asp-72 each bind ATP. Residues Asp-72 and Glu-140 each coordinate Mg(2+). Residues 147 to 149 (DIE), 187 to 192 (KTKPTQ), and Lys-223 contribute to the CTP site. UTP-binding positions include 187–192 (KTKPTQ) and Lys-223. 239 to 241 (KDV) lines the ATP pocket. One can recognise a Glutamine amidotransferase type-1 domain in the interval 291–542 (SIGMVGKYIE…VKSALAHHQD (252 aa)). Gly-352 provides a ligand contact to L-glutamine. Cys-379 serves as the catalytic Nucleophile; for glutamine hydrolysis. L-glutamine is bound by residues 380–383 (LGMQ), Glu-403, and Arg-470. Residues His-515 and Glu-517 contribute to the active site.

The protein belongs to the CTP synthase family. Homotetramer.

It catalyses the reaction UTP + L-glutamine + ATP + H2O = CTP + L-glutamate + ADP + phosphate + 2 H(+). It carries out the reaction L-glutamine + H2O = L-glutamate + NH4(+). The enzyme catalyses UTP + NH4(+) + ATP = CTP + ADP + phosphate + 2 H(+). It participates in pyrimidine metabolism; CTP biosynthesis via de novo pathway; CTP from UDP: step 2/2. Its activity is regulated as follows. Allosterically activated by GTP, when glutamine is the substrate; GTP has no effect on the reaction when ammonia is the substrate. The allosteric effector GTP functions by stabilizing the protein conformation that binds the tetrahedral intermediate(s) formed during glutamine hydrolysis. Inhibited by the product CTP, via allosteric rather than competitive inhibition. In terms of biological role, catalyzes the ATP-dependent amination of UTP to CTP with either L-glutamine or ammonia as the source of nitrogen. Regulates intracellular CTP levels through interactions with the four ribonucleotide triphosphates. In Hamiltonella defensa subsp. Acyrthosiphon pisum (strain 5AT), this protein is CTP synthase.